Reading from the N-terminus, the 118-residue chain is Disulfide bond formation protein (118 aa).

An N-terminal signal peptide occupies residues 1-27 (MRAKWLWMTAVGSLLITVLTAWGWAAA). Positions 28-114 (SSQDSKIVYV…VAEAVLRSFF (87 aa)) constitute a Thioredoxin domain. Cysteine 42 and cysteine 45 form a disulfide bridge.

The protein belongs to the thioredoxin family.

Its subcellular location is the secreted. Stimulates the oxidation and reduction of disulfide bonds in vitro. This is Disulfide bond formation protein (bdb) from Brevibacillus choshinensis.